The sequence spans 702 residues: MASARVPQQLFLQGVAAVYLFAFASLYTQIPGLYGPEGILPARRTLRPQGKGRWQQLWETPTILWEAPRLGLDTAQGLDLLTLLGTVLALGALLLNSLRHPFIYLLLWAAYLSACQVGQVFLYFQWDSLLLETGFLAILVAPLRRPSKHKIPQGGLAGALPHEDLPFWLVRWLLFRLMFASGVVKLTSRCPAWWGLTALTYHYETQCLPTPAAWFAHHLPVWLHRLSVVATFLIEIAVPPLFFAPIRRLRLSAFYAQALLQILIIITGNYNFFNLLTLVLTTALLDDRHLSAEPELRCHKKMPTSWPKTLLTSLSLMLELTVYGLLAYGTIYYFGLEVDWQQQIVLSKTTFTFHQFSQWLKMVTLPTVWLGTASLAWELLIALWRWIQVQGWSRKFFAGIQLSVLGTATVFLFLISLVPYSYVEPGTHGRLWTGAHRLFSSVEHLQLANSYGLFRRMTGLGGRPEVVLEGSHDGHHWTEIEFMYKPGNVSRPPPFLIPHQPRLDWQMWFAALGPHTHSPWFTSLVLRLLQGKEPVIRLIQNQVANYPFREQPPTYLRAQRYKYWFSKPGDQSRWWHRQWVEEFFPSVSLGDPTLETLLQQFGLKDKSPPRARSSKNALAQTLNWVRAQLSPLEPSILLWGLLGAVVAIRVVRTLLTPRPLQSSKQTREEKRKQAPKKDSRAVSEQTAPNSNSNGSWAPRRKK.

Helical transmembrane passes span 10–30 (LFLQ…YTQI), 75–95 (AQGL…ALLL), 102–122 (FIYL…QVFL), 123–143 (YFQW…VAPL), 164–184 (DLPF…SGVV), 226–246 (LSVV…FAPI), 259–279 (LLQI…LTLV), 316–336 (LMLE…YFGL), 363–383 (VTLP…LIAL), and 396–416 (FFAG…FLIS). The N-linked (GlcNAc...) asparagine glycan is linked to N488. Residues 628–648 (QLSPLEPSILLWGLLGAVVAI) form a helical membrane-spanning segment. A disordered region spans residues 660–702 (LQSSKQTREEKRKQAPKKDSRAVSEQTAPNSNSNGSWAPRRKK). Basic and acidic residues predominate over residues 665 to 681 (QTREEKRKQAPKKDSRA). A compositionally biased stretch (polar residues) spans 682–695 (VSEQTAPNSNSNGS).

Belongs to the lipase maturation factor family.

The protein localises to the endoplasmic reticulum membrane. Involved in the maturation of specific proteins in the endoplasmic reticulum. May be required for maturation and transport of active lipoprotein lipase (LPL) through the secretory pathway. This is Lipase maturation factor 2 (Lmf2) from Rattus norvegicus (Rat).